The following is a 191-amino-acid chain: Small ribosomal subunit protein uS7 (191 aa).

The tract at residues 56-80 is disordered; sequence NKSGEQGDGDGEGGGKAGGIKKRSL.

Belongs to the universal ribosomal protein uS7 family. As to quaternary structure, part of the 30S ribosomal subunit. Contacts proteins S9 and S11.

Functionally, one of the primary rRNA binding proteins, it binds directly to 16S rRNA where it nucleates assembly of the head domain of the 30S subunit. Is located at the subunit interface close to the decoding center, probably blocks exit of the E-site tRNA. This chain is Small ribosomal subunit protein uS7, found in Coxiella burnetii (strain CbuG_Q212) (Coxiella burnetii (strain Q212)).